Consider the following 327-residue polypeptide: Eukaryotic translation initiation factor 3 subunit I (327 aa).

6 WD repeats span residues 8-49, 51-91, 144-183, 188-227, 229-268, and 285-324; these read GHDR…GTYD, HNGV…NSVS, SLQT…DIVN, AHKF…CLKT, KAER…GHFE, and GHFG…LKFD.

This sequence belongs to the eIF-3 subunit I family. In terms of assembly, component of the eukaryotic translation initiation factor 3 (eIF-3) complex.

The protein localises to the cytoplasm. Its function is as follows. Component of the eukaryotic translation initiation factor 3 (eIF-3) complex, which is involved in protein synthesis of a specialized repertoire of mRNAs and, together with other initiation factors, stimulates binding of mRNA and methionyl-tRNAi to the 40S ribosome. The eIF-3 complex specifically targets and initiates translation of a subset of mRNAs involved in cell proliferation. The polypeptide is Eukaryotic translation initiation factor 3 subunit I (Brugia malayi (Filarial nematode worm)).